The primary structure comprises 78 residues: Probable [Fe-S]-dependent transcriptional repressor (78 aa).

Cysteine 56, cysteine 61, cysteine 64, and cysteine 70 together coordinate iron-sulfur cluster.

The protein belongs to the FeoC family.

Its function is as follows. May function as a transcriptional regulator that controls feoABC expression. This chain is Probable [Fe-S]-dependent transcriptional repressor, found in Enterobacter sp. (strain 638).